A 405-amino-acid polypeptide reads, in one-letter code: Diaminopimelate decarboxylase (405 aa).

Lys46 is subject to N6-(pyridoxal phosphate)lysine. Pyridoxal 5'-phosphate-binding positions include Gly225 and 259–262; that span reads EPGR. Positions 262, 298, and 302 each coordinate substrate. Catalysis depends on Cys329, which acts as the Proton donor. Positions 330 and 358 each coordinate substrate. Tyr358 is a binding site for pyridoxal 5'-phosphate.

It belongs to the Orn/Lys/Arg decarboxylase class-II family. LysA subfamily. In terms of assembly, homodimer. The cofactor is pyridoxal 5'-phosphate.

The enzyme catalyses meso-2,6-diaminopimelate + H(+) = L-lysine + CO2. It functions in the pathway amino-acid biosynthesis; L-lysine biosynthesis via DAP pathway; L-lysine from DL-2,6-diaminopimelate: step 1/1. Its function is as follows. Specifically catalyzes the decarboxylation of meso-diaminopimelate (meso-DAP) to L-lysine. The chain is Diaminopimelate decarboxylase from Helicobacter pylori (Campylobacter pylori).